Here is a 1094-residue protein sequence, read N- to C-terminus: Transport and Golgi organization protein 6 homolog (1094 aa).

The chain crosses the membrane as a helical span at residues 468–488 (LTVLMDSLLPVLGVLFLLYCF). The residue at position 556 (serine 556) is a Phosphoserine. Residues 777 to 795 (EEQQQTSHERPTDVAHSHL) show a composition bias toward basic and acidic residues. Positions 777–834 (EEQQQTSHERPTDVAHSHLEQQQSHETAPQTGLQSNAPIIPQGVNEPSTTTSQKSGSV) are disordered. Composition is skewed to polar residues over residues 796–813 (EQQQ…QSNA) and 821–834 (NEPS…SGSV). HEAT repeat units lie at residues 873-909 (LEMQ…SDVY) and 952-988 (SKYR…CQRL).

The protein belongs to the Tango6 family.

It localises to the membrane. The chain is Transport and Golgi organization protein 6 homolog (TANGO6) from Homo sapiens (Human).